The chain runs to 1028 residues: Antigenic heat-stable 120 kDa protein (1028 aa).

2 stretches are compositionally biased toward polar residues: residues 359–384 and 391–400; these read GQSK…QYKQ and PTNQPLQPET. A disordered region spans residues 359–405; that stretch reads GQSKEQPLITPQQTTSSSVEPPQYKQQVPPITPTNQPLQPETSQMQQ.

Its subcellular location is the cytoplasm. The polypeptide is Antigenic heat-stable 120 kDa protein (sca4) (Rickettsia africae).